The sequence spans 147 residues: Putative pre-16S rRNA nuclease (147 aa).

This sequence belongs to the YqgF nuclease family.

Its subcellular location is the cytoplasm. Functionally, could be a nuclease involved in processing of the 5'-end of pre-16S rRNA. The sequence is that of Putative pre-16S rRNA nuclease from Ligilactobacillus salivarius (strain UCC118) (Lactobacillus salivarius).